A 328-amino-acid chain; its full sequence is UPF0421 protein SE_1574 (328 aa).

Helical transmembrane passes span Leu-26–Ile-46, Leu-61–Gln-81, Ala-109–Phe-129, and Leu-132–Pro-152.

It belongs to the UPF0421 family.

It is found in the cell membrane. This Staphylococcus epidermidis (strain ATCC 12228 / FDA PCI 1200) protein is UPF0421 protein SE_1574.